The chain runs to 407 residues: Endo-1,4-beta-xylanase (407 aa).

The N-terminal stretch at M1–A28 is a signal peptide. The region spanning A42–H406 is the GH10 domain. E187 acts as the Proton donor in catalysis. E293 (nucleophile) is an active-site residue.

Belongs to the glycosyl hydrolase 10 (cellulase F) family.

It is found in the secreted. It catalyses the reaction Endohydrolysis of (1-&gt;4)-beta-D-xylosidic linkages in xylans.. It participates in glycan degradation; xylan degradation. The polypeptide is Endo-1,4-beta-xylanase (Geobacillus stearothermophilus (Bacillus stearothermophilus)).